The chain runs to 416 residues: Keratin, type I cuticular Ha1 (416 aa).

The segment at 2-56 (PYNCCLPALSCRTSCSSRPCVPPSCHGCTLPGACNIPANVGNCNWFCEGSFNGNE) is head. The IF rod domain occupies 56 to 367 (EKETMQFLND…GLLESEDCKL (312 aa)). Residues 57 to 91 (KETMQFLNDRLASYMEKVRQLERENAELECRIQER) form a coil 1A region. The segment at 92–102 (NQQQDPLVCPA) is linker 1. The coil 1B stretch occupies residues 103 to 203 (YQAYFRTIEE…HEEEVNTLRC (101 aa)). The segment at 204 to 219 (QLGDRLNVEVDAAPTV) is linker 12. The coil 2 stretch occupies residues 220 to 363 (DLNRVLNETR…NTYRGLLESE (144 aa)). Residues 364 to 416 (DCKLPCNPCATSNACGKPIGPCVSNPCVPCPPPAPCTPCVPRPRCGPCNSFVR) are tail.

This sequence belongs to the intermediate filament family.

This Mus musculus (Mouse) protein is Keratin, type I cuticular Ha1 (Krt31).